The primary structure comprises 73 residues: MKTLYLRNVPDDVVERLERLAELAKTSVSAVAVRELTEASRRADNPALLGDLPDIGIDTTELIGGIDAERAGR.

Its function is as follows. Antitoxin component of a possible type II toxin-antitoxin (TA) system. The cognate toxin is VapC9. This chain is Putative antitoxin VapB9 (vapB9), found in Mycobacterium tuberculosis (strain CDC 1551 / Oshkosh).